We begin with the raw amino-acid sequence, 275 residues long: Large ribosomal subunit protein uL2 (275 aa).

The segment at 223-275 is disordered; it reads GVVMNPVDHPHGGGEGRGKGHHPQSPWGVPAKGYKTRRGKRASDKFIVRRRNG. Residues 230-240 are compositionally biased toward basic and acidic residues; sequence DHPHGGGEGRG.

The protein belongs to the universal ribosomal protein uL2 family. In terms of assembly, part of the 50S ribosomal subunit. Forms a bridge to the 30S subunit in the 70S ribosome.

One of the primary rRNA binding proteins. Required for association of the 30S and 50S subunits to form the 70S ribosome, for tRNA binding and peptide bond formation. It has been suggested to have peptidyltransferase activity; this is somewhat controversial. Makes several contacts with the 16S rRNA in the 70S ribosome. This is Large ribosomal subunit protein uL2 from Fervidobacterium nodosum (strain ATCC 35602 / DSM 5306 / Rt17-B1).